The following is a 599-amino-acid chain: Sulfite reductase [NADPH] flavoprotein alpha-component (599 aa).

One can recognise a Flavodoxin-like domain in the interval 64–202 (ITIISASQTG…AASEWRARVV (139 aa)). FMN contacts are provided by residues 70–75 (SQTGNA), 117–120 (STQG), and 153–162 (LGDSSYEFFC). Residues 234–448 (DAPLVASLSV…IEHNDNFRLP (215 aa)) enclose the FAD-binding FR-type domain. FAD contacts are provided by residues T322, A356, 386–389 (RLYS), 404–406 (TVG), Y410, and 419–422 (GGAS). Residues 519–520 (SR), 525–529 (KVYVQ), and D561 each bind NADP(+). An FAD-binding site is contributed by Y599.

Belongs to the NADPH-dependent sulphite reductase flavoprotein subunit CysJ family. This sequence in the N-terminal section; belongs to the flavodoxin family. It in the C-terminal section; belongs to the flavoprotein pyridine nucleotide cytochrome reductase family. As to quaternary structure, alpha(8)-beta(8). The alpha component is a flavoprotein, the beta component is a hemoprotein. The cofactor is FAD. FMN is required as a cofactor.

The catalysed reaction is hydrogen sulfide + 3 NADP(+) + 3 H2O = sulfite + 3 NADPH + 4 H(+). It functions in the pathway sulfur metabolism; hydrogen sulfide biosynthesis; hydrogen sulfide from sulfite (NADPH route): step 1/1. Functionally, component of the sulfite reductase complex that catalyzes the 6-electron reduction of sulfite to sulfide. This is one of several activities required for the biosynthesis of L-cysteine from sulfate. The flavoprotein component catalyzes the electron flow from NADPH -&gt; FAD -&gt; FMN to the hemoprotein component. This is Sulfite reductase [NADPH] flavoprotein alpha-component from Escherichia coli O157:H7.